The chain runs to 89 residues: Small ribosomal subunit protein uS15 (89 aa).

Belongs to the universal ribosomal protein uS15 family. In terms of assembly, part of the 30S ribosomal subunit. Forms a bridge to the 50S subunit in the 70S ribosome, contacting the 23S rRNA.

One of the primary rRNA binding proteins, it binds directly to 16S rRNA where it helps nucleate assembly of the platform of the 30S subunit by binding and bridging several RNA helices of the 16S rRNA. In terms of biological role, forms an intersubunit bridge (bridge B4) with the 23S rRNA of the 50S subunit in the ribosome. This chain is Small ribosomal subunit protein uS15, found in Chlorobium phaeobacteroides (strain DSM 266 / SMG 266 / 2430).